A 168-amino-acid chain; its full sequence is Protein-export protein SecB (168 aa).

Belongs to the SecB family. Homotetramer, a dimer of dimers. One homotetramer interacts with 1 SecA dimer.

It is found in the cytoplasm. Functionally, one of the proteins required for the normal export of preproteins out of the cell cytoplasm. It is a molecular chaperone that binds to a subset of precursor proteins, maintaining them in a translocation-competent state. It also specifically binds to its receptor SecA. This chain is Protein-export protein SecB, found in Rhizobium meliloti (strain 1021) (Ensifer meliloti).